We begin with the raw amino-acid sequence, 551 residues long: Membrane protein insertase YidC (551 aa).

The helical transmembrane segment at 3 to 23 (ANHIRILLLVTIAIMFISLMG) threads the bilayer. Residues 33-47 (NTKQQTSATQNNSHY) are compositionally biased toward polar residues. A disordered region spans residues 33-59 (NTKQQTSATQNNSHYDNADSSTNTDVT). Over residues 50–59 (ADSSTNTDVT) the composition is skewed to low complexity. 3 helical membrane passes run 361 to 381 (LVGNWGLAIILVTCLIKLIFY), 431 to 451 (LSGCLPMLIQIPIFISLYWVL), and 504 to 524 (VMMFLPVIFTFLFASFPSGLV).

The protein belongs to the OXA1/ALB3/YidC family. Type 1 subfamily. As to quaternary structure, interacts with the Sec translocase complex via SecD. Specifically interacts with transmembrane segments of nascent integral membrane proteins during membrane integration.

Its subcellular location is the cell inner membrane. Functionally, required for the insertion and/or proper folding and/or complex formation of integral membrane proteins into the membrane. Involved in integration of membrane proteins that insert both dependently and independently of the Sec translocase complex, as well as at least some lipoproteins. Aids folding of multispanning membrane proteins. The protein is Membrane protein insertase YidC of Francisella tularensis subsp. mediasiatica (strain FSC147).